The primary structure comprises 315 residues: Cross-pathway control WD-repeat protein 2 (315 aa).

WD repeat units lie at residues glycine 14–glycine 54, glycine 62–arginine 101, glycine 104–lysine 144, cysteine 147–asparagine 188, glycine 191–serine 230, glutamate 232–glutamate 270, and glycine 282–serine 315.

This sequence belongs to the WD repeat G protein beta family. Ribosomal protein RACK1 subfamily.

In terms of biological role, component of the ribosome, a large ribonucleoprotein complex responsible for the synthesis of proteins in the cell. The small ribosomal subunit (SSU) binds messenger RNAs (mRNAs) and translates the encoded message by selecting cognate aminoacyl-transfer RNA (tRNA) molecules. The large subunit (LSU) contains the ribosomal catalytic site termed the peptidyl transferase center (PTC), which catalyzes the formation of peptide bonds, thereby polymerizing the amino acids delivered by tRNAs into a polypeptide chain. The nascent polypeptides leave the ribosome through a tunnel in the LSU and interact with protein factors that function in enzymatic processing, targeting, and the membrane insertion of nascent chains at the exit of the ribosomal tunnel. Plays in important role in the regulation of vegetative growth and fruiting body development. Especially, positively regulates the expression of genes involved in fruiting body development such as FVFD30 and FVFD16, as well as genes encoding for lectins and hydrophobins. Also regulates the expression of genes involved in cAMP signaling pathway. This chain is Cross-pathway control WD-repeat protein 2, found in Flammulina velutipes (Agaricus velutipes).